The sequence spans 629 residues: tRNA uridine 5-carboxymethylaminomethyl modification enzyme MnmG (629 aa).

Residues 14 to 19 (GAGHAG), Val126, and Ser181 each bind FAD. 273-287 (GPRYCPSIEDKVVRF) lines the NAD(+) pocket. Residue Gln370 coordinates FAD.

It belongs to the MnmG family. Homodimer. Heterotetramer of two MnmE and two MnmG subunits. FAD serves as cofactor.

Its subcellular location is the cytoplasm. In terms of biological role, NAD-binding protein involved in the addition of a carboxymethylaminomethyl (cmnm) group at the wobble position (U34) of certain tRNAs, forming tRNA-cmnm(5)s(2)U34. This is tRNA uridine 5-carboxymethylaminomethyl modification enzyme MnmG from Bacillus mycoides (strain KBAB4) (Bacillus weihenstephanensis).